The primary structure comprises 580 residues: MNYQVTVSGDPELAQESVDFVSSGFGNMSMNVNTTSSHHHHHSNSGNAEVSFNGGFGMPNMTMEVKETHSGHHHHHSNGGNAEISINSGFGMPSMTMSVTDSNSGHHHHHHKESASVNLSLGGIVGAVVGAVTGGVMIDGRNRIWVQLNQSSYVGGDIISGTIEMDCIVPFFAKGVIVKVKGFERLWLQELRTETEGEGSNKRTVYKTIDHKENKEFFKSTIVVYPQAGTVNCGHYSFPFSYQLPSDLPGTFCHDGKDAMGAYSAKILYKCKATVDVAHKHDLKSTTKLIINEKCGELVQPSFAENKKSFMLTKGKLHVKTWLNKNAYFPGETLVAKMKANNTSIKPTRKISLVVHHTMQLKTRLYHRCITNAIYKQQYDGFQPCFYGKRYLPFSIPVDLKPSSSLGKHITSSYLLELECDIPMAIDLSVTLPLTLFAPQFLYSTVPSQPPGTPLPPDVSYRHPWEGDEHATACRKCNKGFSLFARKHHCRHCMKIFCDKCTSTKTTITKLAYPKPVRVCEECYPIATQGGNKYQSAKLMAAQYQASLNAYYAQYASLYPQIYPDQQQQQQQPSAPPQQY.

N-linked (GlcNAc...) asparagine glycans are attached at residues Asn-27, Asn-33, and Asn-60. Positions 31–54 (NVNTTSSHHHHHSNSGNAEVSFNG) are disordered. 2 disordered regions span residues 67–86 (ETHS…EISI) and 95–114 (MTMS…HKES). Residues 118-138 (NLSLGGIVGAVVGAVTGGVMI) traverse the membrane as a helical segment. Residues Asn-149, Asn-341, and Asn-342 are each glycosylated (N-linked (GlcNAc...) asparagine). The FYVE-type zinc finger occupies 468-528 (DEHATACRKC…VCEECYPIAT (61 aa)). Cys-474, Cys-477, Cys-490, Cys-493, Cys-498, Cys-501, Cys-520, and Cys-523 together coordinate Zn(2+).

Belongs to the arrestin family.

Its subcellular location is the membrane. The polypeptide is Arrestin domain-containing protein A (adcA) (Dictyostelium discoideum (Social amoeba)).